The following is a 366-amino-acid chain: 4-hydroxy-3-methylbut-2-en-1-yl diphosphate synthase (flavodoxin) (366 aa).

Cys270, Cys273, Cys305, and Glu312 together coordinate [4Fe-4S] cluster.

The protein belongs to the IspG family. Requires [4Fe-4S] cluster as cofactor.

It carries out the reaction (2E)-4-hydroxy-3-methylbut-2-enyl diphosphate + oxidized [flavodoxin] + H2O + 2 H(+) = 2-C-methyl-D-erythritol 2,4-cyclic diphosphate + reduced [flavodoxin]. It functions in the pathway isoprenoid biosynthesis; isopentenyl diphosphate biosynthesis via DXP pathway; isopentenyl diphosphate from 1-deoxy-D-xylulose 5-phosphate: step 5/6. Its function is as follows. Converts 2C-methyl-D-erythritol 2,4-cyclodiphosphate (ME-2,4cPP) into 1-hydroxy-2-methyl-2-(E)-butenyl 4-diphosphate. This is 4-hydroxy-3-methylbut-2-en-1-yl diphosphate synthase (flavodoxin) from Acidithiobacillus ferrooxidans (strain ATCC 53993 / BNL-5-31) (Leptospirillum ferrooxidans (ATCC 53993)).